Reading from the N-terminus, the 938-residue chain is Myocardin (938 aa).

The short motif at 12–27 (IRSKFRSVLQLRLQQR) is the MEF2C-binding element. The stretch at 18–43 (SVLQLRLQQRRTQEQLANQGIIPPLK) is one RPEL 1 repeat. A compositionally biased stretch (basic and acidic residues) spans 48 to 61 (FHEQRKHLDSDKAK). Positions 48-68 (FHEQRKHLDSDKAKNSLKRKA) are disordered. 2 RPEL repeats span residues 62 to 87 (NSLKRKARNRCNSADLVNMHILQAST) and 106 to 131 (DDLNEKIALRPGPLELVEKNILPVDS). The segment at 153-205 (FEEDSSSDGLSPDQTRSEDPQNSAGSPPDAKASDTPSTGSLGTNQDLASGSEN) is HDAC5-binding. Positions 154–281 (EEDSSSDGLS…DQKAEKSPPP (128 aa)) are disordered. Polar residues-rich tracts occupy residues 159–177 (SDGLSPDQTRSEDPQNSAG), 186–203 (DTPSTGSLGTNQDLASGS), and 210–220 (SASQPSHQSDA). Positions 248-265 (NRHKKPKDPKPKVKKLKY) are enriched in basic residues. One can recognise an SAP domain in the interval 371-405 (LDDLKVSELRQQLRIRGLPVSGTKTALMDRLRPFQ). Phosphoserine; by GSK3-beta is present on residues Ser451, Ser455, Ser459, and Ser463. Positions 516–561 (EKDKMLVEKQKVINELTWKLQQEQRQVEELRMQLQKQKRNNCSEKK) form a coiled coil. 4 positions are modified to phosphoserine; by GSK3-beta: Ser626, Ser630, Ser634, and Ser638. Disordered stretches follow at residues 635-678 (PQHS…SSPI) and 693-734 (SDKV…MTRS). The segment covering 699–715 (KFSIPSPTFSKSSSAIS) has biased composition (low complexity). The segment at 717–938 (VTQPPSYEDA…SSMDLHLQQW (222 aa)) is required for interaction with and ubiquitination by STUB1. 3 positions are modified to phosphoserine; by MAPK1 and MAPK3: Ser815, Ser862, and Ser869. The residue at position 896 (Thr896) is a Phosphothreonine; by MAPK1 and MAPK3.

As to quaternary structure, homodimer. Interacts with SRF, its association does not depend on specific DNA sequences for ternary complex formation. Interacts with MLLT7/FOXO4. Interacts (via C-terminal) with EP300 (via the CREB-binding domain). Interacts with HDAC4 and HDAC5. Interacts with MEF2C. Interacts (via C-terminus) with STUB1/CHIP. Interacts with PURB. In terms of processing, ubiquitinated; by STUB1/CHIP at the C-terminus, leading to its degradation by the proteasome. Phosphorylation by GSK3B is required for STUB1/CHIP-mediated ubiquitination. Phosphorylation negatively regulates the intrinsic myocardin transcriptional activity. Phosphorylated; by GSK3B. As to expression, expressed in the heart, aorta and bladder. Expressed in smooth muscle cell-containing tissues: stomach, small intestine, colon, lung, placenta and uterus. Very faint expression in prostate and skeletal muscle.

The protein resides in the nucleus. In terms of biological role, smooth muscle cells (SM) and cardiac muscle cells-specific transcriptional factor which uses the canonical single or multiple CArG boxes DNA sequence. Acts as a cofactor of serum response factor (SRF) with the potential to modulate SRF-target genes. Plays a crucial role in cardiogenesis, urinary bladder development, and differentiation of the smooth muscle cell lineage (myogenesis). Positively regulates the transcription of genes involved in vascular smooth muscle contraction. In Homo sapiens (Human), this protein is Myocardin (MYOCD).